Reading from the N-terminus, the 373-residue chain is Alcohol dehydrogenase 2 (373 aa).

Zn(2+) contacts are provided by Cys47, Thr49, His69, Cys99, Cys102, Cys105, Cys113, and Cys177. The an alcohol site is built by Thr49 and His69. NAD(+) is bound at residue Thr49. Residues 202 to 207, Asp226, Lys231, Thr272, Phe316, and Arg366 contribute to the NAD(+) site; that span reads GLGAVG.

The protein belongs to the zinc-containing alcohol dehydrogenase family. In terms of assembly, homodimer. Zn(2+) is required as a cofactor.

The protein resides in the cytoplasm. The catalysed reaction is a primary alcohol + NAD(+) = an aldehyde + NADH + H(+). It carries out the reaction a secondary alcohol + NAD(+) = a ketone + NADH + H(+). The protein is Alcohol dehydrogenase 2 (ADH2) of Hordeum vulgare (Barley).